A 669-amino-acid chain; its full sequence is DNA ligase (669 aa).

NAD(+) contacts are provided by residues 33–37 (DLTYD), 82–83 (SL), and E115. K117 serves as the catalytic N6-AMP-lysine intermediate. Residues R138, E172, K286, and K310 each coordinate NAD(+). Zn(2+) is bound by residues C401, C404, C417, and C422.

The protein belongs to the NAD-dependent DNA ligase family. LigA subfamily. It depends on Mg(2+) as a cofactor. Mn(2+) serves as cofactor.

It carries out the reaction NAD(+) + (deoxyribonucleotide)n-3'-hydroxyl + 5'-phospho-(deoxyribonucleotide)m = (deoxyribonucleotide)n+m + AMP + beta-nicotinamide D-nucleotide.. Functionally, DNA ligase that catalyzes the formation of phosphodiester linkages between 5'-phosphoryl and 3'-hydroxyl groups in double-stranded DNA using NAD as a coenzyme and as the energy source for the reaction. It is essential for DNA replication and repair of damaged DNA. This Borrelia hermsii (strain HS1 / DAH) protein is DNA ligase.